A 63-amino-acid polypeptide reads, in one-letter code: Kappa-theraphotoxin-Cg3a 1 (63 aa).

A signal peptide spans 1 to 21; it reads MKNTSILFILGLALLLVLAFE. Residues 22-29 constitute a propeptide that is removed on maturation; that stretch reads VQVGESDG. 3 cysteine pairs are disulfide-bonded: cysteine 31-cysteine 46, cysteine 38-cysteine 51, and cysteine 45-cysteine 58.

It belongs to the neurotoxin 10 (Hwtx-1) family. 44 (Jztx-4) subfamily. In terms of tissue distribution, expressed by the venom gland.

It is found in the secreted. Its function is as follows. Gating modifier of Kv2.1/KCNB1, Kv2.2/KCNB2 and Kv4.3/KCND3 channels. In Chilobrachys guangxiensis (Chinese earth tiger tarantula), this protein is Kappa-theraphotoxin-Cg3a 1.